The chain runs to 97 residues: Large ribosomal subunit protein eL21 (97 aa).

It belongs to the eukaryotic ribosomal protein eL21 family.

In Methanosarcina mazei (strain ATCC BAA-159 / DSM 3647 / Goe1 / Go1 / JCM 11833 / OCM 88) (Methanosarcina frisia), this protein is Large ribosomal subunit protein eL21.